Consider the following 360-residue polypeptide: Photosystem II protein D1 (360 aa).

3 helical membrane passes run 29–46 (YIGW…TATT), 118–133 (HFLL…EWEF), and 142–156 (WISV…AASA). Histidine 118 lines the chlorophyll a pocket. Tryptophan 126 lines the pheophytin a pocket. 2 residues coordinate [CaMn4O5] cluster: aspartate 170 and glutamate 189. A helical membrane pass occupies residues 197 to 218 (FHQLGVAGVFGGSLFSAMHGSL). Position 198 (histidine 198) interacts with chlorophyll a. A quinone is bound by residues histidine 215 and 264–265 (SF). Histidine 215 provides a ligand contact to Fe cation. Histidine 272 provides a ligand contact to Fe cation. Residues 274–288 (FLGLWPVVGIWFTAL) form a helical membrane-spanning segment. [CaMn4O5] cluster contacts are provided by histidine 332, glutamate 333, aspartate 342, and alanine 344. The propeptide occupies 345 to 360 (SGESLPVALTAPAVIG).

The protein belongs to the reaction center PufL/M/PsbA/D family. As to quaternary structure, PSII is composed of 1 copy each of membrane proteins PsbA, PsbB, PsbC, PsbD, PsbE, PsbF, PsbH, PsbI, PsbJ, PsbK, PsbL, PsbM, PsbT, PsbX, PsbY, PsbZ, Psb30/Ycf12, at least 3 peripheral proteins of the oxygen-evolving complex and a large number of cofactors. It forms dimeric complexes. The D1/D2 heterodimer binds P680, chlorophylls that are the primary electron donor of PSII, and subsequent electron acceptors. It shares a non-heme iron and each subunit binds pheophytin, quinone, additional chlorophylls, carotenoids and lipids. D1 provides most of the ligands for the Mn4-Ca-O5 cluster of the oxygen-evolving complex (OEC). There is also a Cl(-1) ion associated with D1 and D2, which is required for oxygen evolution. The PSII complex binds additional chlorophylls, carotenoids and specific lipids. is required as a cofactor. Post-translationally, tyr-161 forms a radical intermediate that is referred to as redox-active TyrZ, YZ or Y-Z. In terms of processing, C-terminally processed by CTPA; processing is essential to allow assembly of the oxygen-evolving complex and thus photosynthetic growth.

Its subcellular location is the plastid. The protein resides in the chloroplast thylakoid membrane. It carries out the reaction 2 a plastoquinone + 4 hnu + 2 H2O = 2 a plastoquinol + O2. Photosystem II (PSII) is a light-driven water:plastoquinone oxidoreductase that uses light energy to abstract electrons from H(2)O, generating O(2) and a proton gradient subsequently used for ATP formation. It consists of a core antenna complex that captures photons, and an electron transfer chain that converts photonic excitation into a charge separation. The D1/D2 (PsbA/PsbD) reaction center heterodimer binds P680, the primary electron donor of PSII as well as several subsequent electron acceptors. This Guillardia theta (Cryptophyte) protein is Photosystem II protein D1.